A 176-amino-acid chain; its full sequence is Ribosome maturation factor RimM (176 aa).

The PRC barrel domain occupies 99-174 (KNEFYITDLI…IVLIQPEIWN (76 aa)).

This sequence belongs to the RimM family. Binds ribosomal protein uS19.

The protein localises to the cytoplasm. In terms of biological role, an accessory protein needed during the final step in the assembly of 30S ribosomal subunit, possibly for assembly of the head region. Essential for efficient processing of 16S rRNA. May be needed both before and after RbfA during the maturation of 16S rRNA. It has affinity for free ribosomal 30S subunits but not for 70S ribosomes. The protein is Ribosome maturation factor RimM of Leptospira interrogans serogroup Icterohaemorrhagiae serovar copenhageni (strain Fiocruz L1-130).